A 351-amino-acid chain; its full sequence is Protein-glutamate methylesterase/protein-glutamine glutaminase (351 aa).

Residues 6–123 (RVLVVDDSPT…ARPFGDLADK (118 aa)) enclose the Response regulatory domain. Asp-57 carries the post-translational modification 4-aspartylphosphate. One can recognise a CheB-type methylesterase domain in the interval 154–346 (YRAGRKVVAI…EEILKLTTAR (193 aa)). Catalysis depends on residues Ser-166, His-192, and Asp-288.

This sequence belongs to the CheB family. In terms of processing, phosphorylated by CheA. Phosphorylation of the N-terminal regulatory domain activates the methylesterase activity.

The protein resides in the cytoplasm. It catalyses the reaction [protein]-L-glutamate 5-O-methyl ester + H2O = L-glutamyl-[protein] + methanol + H(+). It carries out the reaction L-glutaminyl-[protein] + H2O = L-glutamyl-[protein] + NH4(+). In terms of biological role, involved in chemotaxis. Part of a chemotaxis signal transduction system that modulates chemotaxis in response to various stimuli. Catalyzes the demethylation of specific methylglutamate residues introduced into the chemoreceptors (methyl-accepting chemotaxis proteins or MCP) by CheR. Also mediates the irreversible deamidation of specific glutamine residues to glutamic acid. This Agrobacterium fabrum (strain C58 / ATCC 33970) (Agrobacterium tumefaciens (strain C58)) protein is Protein-glutamate methylesterase/protein-glutamine glutaminase.